The following is a 292-amino-acid chain: RWD domain-containing protein 2A (292 aa).

An RWD domain is found at 14 to 134 (LEMEMLFSMF…QWLQDNSASY (121 aa)).

This is RWD domain-containing protein 2A (RWDD2A) from Homo sapiens (Human).